The chain runs to 61 residues: Potassium channel toxin alpha-KTx 3.18 (61 aa).

The first 23 residues, 1 to 23 (MKMFFTVLVTLFVCSMIIGICEG), serve as a signal peptide directing secretion. Cystine bridges form between Cys-30/Cys-50, Cys-36/Cys-55, and Cys-40/Cys-57. Lysine amide is present on Lys-60.

As to expression, expressed by the venom gland.

It is found in the secreted. Inhibits voltage-gated potassium channel rKv1.1/KCNA1 at nanomolar ranges (IC(50)=90 +-2 nM, reduction of current by 30% at 50 nM or toxin). The sequence is that of Potassium channel toxin alpha-KTx 3.18 from Mesobuthus eupeus (Lesser Asian scorpion).